Consider the following 865-residue polypeptide: Cadherin-related family member 1 (865 aa).

Positions 1 to 23 are cleaved as a signal peptide; it reads MKHVRHFIPSLFLSLVHVCLVQA. Residues 24–705 lie on the Extracellular side of the membrane; it reads NYAPYFFDNG…TKDNPMKALG (682 aa). Cadherin domains follow at residues 38-137, 138-249, 250-356, 362-475, 476-579, and 571-690; these read NGNM…SPEF, INTP…PPMF, IGTP…PPTF, PQNR…VPKF, SSDY…SPEF, and DVND…GPMA. The chain crosses the membrane as a helical span at residues 706-726; it reads VLAGVMGIMVLITIMISTAMF. Topologically, residues 727–865 are cytoplasmic; the sequence is WRNKRSNKIM…RNASMGEPHI (139 aa). Positions 782 to 810 are disordered; it reads ENSNNNVQAAPVPPAAPLPPPPPALAASG. The segment covering 792-805 has biased composition (pro residues); it reads PVPPAAPLPPPPPA.

Its subcellular location is the membrane. Functionally, potential calcium-dependent cell-adhesion protein. This is Cadherin-related family member 1 (CDHR1) from Gallus gallus (Chicken).